A 133-amino-acid chain; its full sequence is Small ribosomal subunit protein uS9 (133 aa).

Positions 95 to 113 (GDSKQELKSRGFLTRDPRK) are enriched in basic and acidic residues. Residues 95-133 (GDSKQELKSRGFLTRDPRKKERKKYGHKKARKSFQFSKR) are disordered. Residues 114–133 (KERKKYGHKKARKSFQFSKR) show a composition bias toward basic residues.

It belongs to the universal ribosomal protein uS9 family.

This Chlamydia felis (strain Fe/C-56) (Chlamydophila felis) protein is Small ribosomal subunit protein uS9.